We begin with the raw amino-acid sequence, 346 residues long: MAVGLAEHDKEAWGRLPFSLTIADISQDDEPLIYVNRAFEQMTGYSRSSVVGRNCRFLQGEKTDPGAVERLAKAIRNCEEVEETIYNYRADGEGFWNHLLMGPLEDQDEKCRYFVGIQVDMGQSESPDRATELDRQLAEVQHRVKNHLAMIVSMIRIQSSQAGGVGSQFDSLSRRVEALQLLYQEMDIAGAAKATDKIIPLGAYLGRIASAINHIDGRGAIKVNVQADTVDVPVETAGRIGLLVSEVLTNALQHAFSDRASGVVQLRSSVMSGEQLRVTVEDDGRGIPEDCDWPNEGNLGSRIVRQLVQGLGAELNVTRGGTGTIVNIDIPLSQQKTLIADERTKD.

A PAS domain is found at 8–82; it reads HDKEAWGRLP…KAIRNCEEVE (75 aa). Cys-55 bears the S-4a-FMN cysteine mark. The PAC domain occupies 79–133; that stretch reads EEVEETIYNYRADGEGFWNHLLMGPLEDQDEKCRYFVGIQVDMGQSESPDRATEL. Residues 139 to 334 enclose the Histidine kinase domain; that stretch reads EVQHRVKNHL…IVNIDIPLSQ (196 aa). The residue at position 142 (His-142) is a Phosphohistidine; by autocatalysis.

FMN binds covalently to cysteine after exposure to blue light and this bond is spontaneously broken in the dark.

The enzyme catalyses ATP + protein L-histidine = ADP + protein N-phospho-L-histidine.. In terms of biological role, photosensitive kinase that is involved in increased bacterial virulence upon exposure to light. This Erythrobacter litoralis (strain HTCC2594) protein is Blue-light-activated histidine kinase 2.